Consider the following 324-residue polypeptide: UDP-N-acetylenolpyruvoylglucosamine reductase (324 aa).

The FAD-binding PCMH-type domain maps to 36 to 217; it reads FRAGGLAELM…IRAEMDAVRA (182 aa). The active site involves R183. S232 acts as the Proton donor in catalysis. E302 is a catalytic residue.

The protein belongs to the MurB family. Requires FAD as cofactor.

It is found in the cytoplasm. It carries out the reaction UDP-N-acetyl-alpha-D-muramate + NADP(+) = UDP-N-acetyl-3-O-(1-carboxyvinyl)-alpha-D-glucosamine + NADPH + H(+). It participates in cell wall biogenesis; peptidoglycan biosynthesis. In terms of biological role, cell wall formation. The sequence is that of UDP-N-acetylenolpyruvoylglucosamine reductase from Rhizobium rhizogenes (strain K84 / ATCC BAA-868) (Agrobacterium radiobacter).